Reading from the N-terminus, the 749-residue chain is Transcription factor RFX3 (749 aa).

Residues 183–258 (HLQWLLDNYE…YHYYGIRVKP (76 aa)) constitute a DNA-binding region (RFX-type winged-helix). Residues 663-699 (VSPGNLDKDEGSEVESETDEDLDDSSEPRAKREKTEL) form a disordered region. Residues 674-687 (SEVESETDEDLDDS) show a composition bias toward acidic residues. Residues 688–698 (SEPRAKREKTE) are compositionally biased toward basic and acidic residues.

Belongs to the RFX family. Heterodimer; heterodimerizes with RFX1 and RFX2, and RFX6. In terms of tissue distribution, expressed in ciliated cells of the node and in the ciliated ependymal cells of the subcommissural organ (SCO), choroid plexuses (CP) and ventricular walls during embryonic and postnatal development. Expressed in developing and mature pancreatic endocrine cells during embryogenesis and in adults (at protein level).

The protein localises to the nucleus. In terms of biological role, transcription factor required for ciliogenesis and islet cell differentiation during endocrine pancreas development. Essential for the differentiation of nodal monocilia and left-right asymmetry specification during embryogenesis. Required for the biogenesis of motile cilia by governing growth and beating efficiency of motile cells. Also required for ciliated ependymal cell differentiation. Together with RFX6, participates in the differentiation of 4 of the 5 islet cell types during endocrine pancreas development, with the exception of pancreatic PP (polypeptide-producing) cells. Regulates transcription by forming a heterodimer with another RFX protein and binding to the X-box in the promoter of target genes. Regulates the expression of genes involved in ciliary assembly (DYNC2LI1, FOXJ1 and BBS4) and genes involved in ciliary motility (DNAH11, DNAH9 and DNAH5). Represses transcription of MAP1A in non-neuronal cells but not in neuronal cells. This is Transcription factor RFX3 (Rfx3) from Mus musculus (Mouse).